We begin with the raw amino-acid sequence, 492 residues long: Probable malate:quinone oxidoreductase 1 (492 aa).

The protein belongs to the MQO family. The cofactor is FAD.

The catalysed reaction is (S)-malate + a quinone = a quinol + oxaloacetate. It functions in the pathway carbohydrate metabolism; tricarboxylic acid cycle; oxaloacetate from (S)-malate (quinone route): step 1/1. The protein is Probable malate:quinone oxidoreductase 1 of Staphylococcus epidermidis (strain ATCC 35984 / DSM 28319 / BCRC 17069 / CCUG 31568 / BM 3577 / RP62A).